The primary structure comprises 108 residues: Zinc finger protein 475 (108 aa).

2 consecutive C2HC/C3H-type zinc fingers follow at residues 6-35 and 79-108; these read PAVV…KWHN and QLVP…KAAK. 8 residues coordinate Zn(2+): C10, C13, H25, C29, C83, C86, H98, and C102.

Requires Zn(2+) as cofactor.

This chain is Zinc finger protein 475, found in Homo sapiens (Human).